The following is a 206-amino-acid chain: Small ribosomal subunit protein eS1 (206 aa).

It belongs to the eukaryotic ribosomal protein eS1 family.

In Halobacterium salinarum (strain ATCC 29341 / DSM 671 / R1), this protein is Small ribosomal subunit protein eS1.